The following is a 496-amino-acid chain: Anaerobic nitric oxide reductase flavorubredoxin (496 aa).

The segment at 30–210 is zinc metallo-hydrolase; that stretch reads TKGTSYNSYL…PFSALVTAKI (181 aa). The Fe cation site is built by His-79, Glu-81, Asp-83, His-147, Asp-166, and His-227. The region spanning 254–393 is the Flavodoxin-like domain; it reads ITIFYDSMSN…LCREHGQFIA (140 aa). Residues 260 to 264 and 342 to 369 contribute to the FMN site; these read SMSNN and AFGS…ETAV. The region spanning 444-495 is the Rubredoxin-like domain; it reads KQCMLCSVCNWVYDPEIGEPNQGVEPNTPWSSVPNDFLCPECHLGKDVFVEI. 4 residues coordinate Fe cation: Cys-449, Cys-452, Cys-482, and Cys-485.

The protein in the N-terminal section; belongs to the zinc metallo-hydrolase group 3 family. In terms of assembly, homotetramer. The cofactor is Fe cation. FMN serves as cofactor.

The protein resides in the cytoplasm. Its pathway is nitrogen metabolism; nitric oxide reduction. Its function is as follows. Anaerobic nitric oxide reductase; uses NADH to detoxify nitric oxide (NO), protecting several 4Fe-4S NO-sensitive enzymes. Has at least 2 reductase partners, only one of which (NorW, flavorubredoxin reductase) has been identified. NO probably binds to the di-iron center; electrons enter from the NorW at rubredoxin and are transferred sequentially to the FMN center and the di-iron center. Also able to function as an aerobic oxygen reductase. This Aliivibrio fischeri (strain ATCC 700601 / ES114) (Vibrio fischeri) protein is Anaerobic nitric oxide reductase flavorubredoxin.